The sequence spans 493 residues: Beta-hexosaminidase Amuc_2018 (493 aa).

Residues 1 to 21 (MARPLPILGGILLSFSPPAEA) form the signal peptide. A substrate-binding site is contributed by Arg-122. Active-site charge relay system residues include Asp-151 and His-214. The Zn(2+) site is built by Cys-227 and Cys-247. Asp-278 is a binding site for substrate. Glu-279 functions as the Charge relay system in the catalytic mechanism. Residues Cys-288 and Cys-291 each contribute to the Zn(2+) site. Substrate contacts are provided by residues Trp-345, 373 to 375 (YLD), and 421 to 423 (WAE).

Belongs to the glycosyl hydrolase 20 family.

The enzyme catalyses Hydrolysis of terminal non-reducing N-acetyl-D-hexosamine residues in N-acetyl-beta-D-hexosaminides.. With respect to regulation, significantly inhibited by the addition of sodium dodecyl sulfate (SDS), but not by EDTA, urea, 2-mercaptoethanol or Triton X-100. Strongly inhibited by Cu2(+) ions, in case of which the activity is decreased by 70%. No significant inhibition with Al(3+), Fe(3+), Ca(2+), Cd(2+), Mg(2+), Mn(2+), Ni(2+) and Zn(2+) ions. Strongly inhibited by PugNAc (O-(2-acetamido-2-deoxy-D-glucopyranosylideneamino) N-phenylcarbamate) in the sub-micromolar concentration range. PugNAc at a concentration of 0.5 mM decreases the activity by 50% and the addition of 1 mM PugNAc fully inhibits the enzyme. No significant reduction in the activity by alkylation using N-ethylmaleimide or 2-iodoacetamide. In terms of biological role, hydrolyzes terminal GlcNAc residues from terminally unbranched N-glycans and from chitobiose. Hydrolyzes beta-1,6-linked N-acetylglucosamine and beta-1,4-linked N-acetylgalactosamine from pNP-alpha-GalNAc[beta1,3Gal]beta1,6GlcNAc and pNP-beta-GlcNAc-beta1,4-GalNAc substrates, respectively, as well as beta-1,2-linked N-acetylglucosamine units from the non-reducing end of N-glycans. Hydrolyzes GlcNAc residues linked to alpha1,3- or alpha1,6-mannose branch, but has low activity on substrates with more than one GlcNAc residue on one of the mannose branches. Releases terminal GlcNAc moieties from the N-glycopeptide Gly-Glu-Asn-(GlcNAc2Man3GlcNAc2)-Arg with high efficiency. Has moderate hydrolytic activity on the chitobiose moiety of N-glycopeptide substrate Gly-Glu-Asn-(GlcNAc2)-Arg. Does not hydrolyze GlcNAc residues from N-glycan structures bearing a bisecting GlcNAc moiety (beta1,4-linked GlcNAc to the beta1,4-linked core mannose). Potentially capable of cleaving the specific glycoside linkages in the process of mucin degradation in human intestinal tract. Hydrolyzes synthetic substrate pNP-beta-GlcNAc with high activity and pNP-beta-GalNAc to a lesser extent. Does not hydrolyze pNP-beta-glucose, pNP-beta-galactose, pNP-alpha-glucose, pNP-alpha-galactose, pNP-alpha-GlcNAc or pNP-alpha-fucose. The protein is Beta-hexosaminidase Amuc_2018 of Akkermansia muciniphila (strain ATCC BAA-835 / DSM 22959 / JCM 33894 / BCRC 81048 / CCUG 64013 / CIP 107961 / Muc).